A 551-amino-acid polypeptide reads, in one-letter code: DNA double-strand break repair helicase HerA (551 aa).

ATP-binding positions include arginine 152, 161–166, and 507–508; these read GAGKSN and RI.

It belongs to the HerA family. Homohexamer. Interacts with NurA.

The enzyme catalyses Couples ATP hydrolysis with the unwinding of duplex DNA at the replication fork by translocating in the 5'-3' direction. This creates two antiparallel DNA single strands (ssDNA). The leading ssDNA polymer is the template for DNA polymerase III holoenzyme which synthesizes a continuous strand.. It carries out the reaction ATP + H2O = ADP + phosphate + H(+). The catalysed reaction is Couples ATP hydrolysis with the unwinding of duplex DNA by translocating in the 3'-5' direction.. Helicase activity is stimulated in the presence of NurA. In terms of biological role, involved in DNA double-strand break (DSB) repair. Probably acts with NurA to stimulate resection of the 5' strand and produce the long 3' single-strand that is required for RadA loading. Has DNA-dependent ATPase activity and DNA helicase activity. The sequence is that of DNA double-strand break repair helicase HerA from Pyrococcus furiosus (strain ATCC 43587 / DSM 3638 / JCM 8422 / Vc1).